A 727-amino-acid polypeptide reads, in one-letter code: Polyribonucleotide nucleotidyltransferase (727 aa).

Mg(2+) contacts are provided by aspartate 488 and aspartate 494. The 60-residue stretch at 555 to 614 (PKLYTMKINPEKIRDVIGKGGATIRALTDETGCQINIEEDGTITIAATEAAKADEAKRRI) folds into the KH domain. In terms of domain architecture, S1 motif spans 624–692 (GKIYEGPVTK…DKGRVKLSMK (69 aa)). The tract at residues 691 to 727 (MKALADRPAGDSGRPAPAERGERRERRDGGASEQQQQ) is disordered. Basic and acidic residues predominate over residues 707-720 (PAERGERRERRDGG).

The protein belongs to the polyribonucleotide nucleotidyltransferase family. It depends on Mg(2+) as a cofactor.

It localises to the cytoplasm. It carries out the reaction RNA(n+1) + phosphate = RNA(n) + a ribonucleoside 5'-diphosphate. Functionally, involved in mRNA degradation. Catalyzes the phosphorolysis of single-stranded polyribonucleotides processively in the 3'- to 5'-direction. In Acidovorax sp. (strain JS42), this protein is Polyribonucleotide nucleotidyltransferase.